Here is a 218-residue protein sequence, read N- to C-terminus: Small ribosomal subunit protein uS3c (218 aa).

The 72-residue stretch at 47–118 (VRKHIKSSSN…KLRMALTEVE (72 aa)) folds into the KH type-2 domain.

This sequence belongs to the universal ribosomal protein uS3 family. As to quaternary structure, part of the 30S ribosomal subunit.

The protein resides in the plastid. The protein localises to the chloroplast. The chain is Small ribosomal subunit protein uS3c (rps3) from Anthoceros angustus (Hornwort).